The sequence spans 432 residues: RING finger protein 44 (432 aa).

Positions 1–86 are disordered; the sequence is MRPWALAVTR…GGSPRMLHPA (86 aa). Positions 56–65 are enriched in pro residues; sequence QQPPSRPPHL. Residues 380 to 421 form an RING-type; atypical zinc finger; that stretch reads CVVCFSDFEARQLLRVLPCNHEFHTKCVDKWLKANRTCPICR.

This is RING finger protein 44 (RNF44) from Homo sapiens (Human).